The sequence spans 299 residues: Glycine--tRNA ligase alpha subunit (299 aa).

This sequence belongs to the class-II aminoacyl-tRNA synthetase family. Tetramer of two alpha and two beta subunits.

The protein localises to the cytoplasm. It carries out the reaction tRNA(Gly) + glycine + ATP = glycyl-tRNA(Gly) + AMP + diphosphate. The sequence is that of Glycine--tRNA ligase alpha subunit from Laribacter hongkongensis (strain HLHK9).